The sequence spans 285 residues: Tropomyosin-2 (285 aa).

Residues 1–277 adopt a coiled-coil conformation; the sequence is MDAIKKKMQA…KDIGDDLDTA (277 aa). The tract at residues 103–133 is disordered; it reads EERLATATAKLSEASQAADESERARKVLENR. A compositionally biased stretch (basic and acidic residues) spans 122 to 133; that stretch reads ESERARKVLENR.

Belongs to the tropomyosin family. As to quaternary structure, homodimer.

Its function is as follows. Tropomyosin, in association with the troponin complex, plays a central role in the calcium dependent regulation of muscle contraction. This Bombyx mori (Silk moth) protein is Tropomyosin-2.